We begin with the raw amino-acid sequence, 371 residues long: Glycosyltransferase 8 domain-containing protein 1 (371 aa).

The Cytoplasmic portion of the chain corresponds to 1–5 (MSFRK). Residues 6–26 (VTIIIWALAVILFLLALHHNF) traverse the membrane as a helical; Signal-anchor for type II membrane protein segment. Topologically, residues 27–371 (LSLSSLLRND…RRHMDTSNIK (345 aa)) are lumenal. N257 is a glycosylation site (N-linked (GlcNAc...) asparagine).

It belongs to the glycosyltransferase 8 family.

It is found in the membrane. This is Glycosyltransferase 8 domain-containing protein 1 (Glt8d1) from Rattus norvegicus (Rat).